Here is a 623-residue protein sequence, read N- to C-terminus: Glutathione import ATP-binding protein GsiA (623 aa).

2 ABC transporter domains span residues 15 to 269 (VSGL…QTLL) and 325 to 564 (LRSG…RKLM). ATP is bound by residues 49–56 (GESGSGKS) and 357–364 (GESGSGKS).

The protein belongs to the ABC transporter superfamily. Glutathione importer (TC 3.A.1.5.11) family. As to quaternary structure, the complex is composed of two ATP-binding proteins (GsiA), two transmembrane proteins (GsiC and GsiD) and a solute-binding protein (GsiB).

The protein resides in the cell inner membrane. The enzyme catalyses glutathione(out) + ATP + H2O = glutathione(in) + ADP + phosphate + H(+). Part of the ABC transporter complex GsiABCD involved in glutathione import. Responsible for energy coupling to the transport system. The protein is Glutathione import ATP-binding protein GsiA of Salmonella paratyphi A (strain ATCC 9150 / SARB42).